Consider the following 374-residue polypeptide: MSRVPSPPPPAEMSSGPVAESWCYTQIKVVKFSYMWTINNFSFCREEMGEVIKSSTFSSGANDKLKWCLRVNPKGLDEESKDYLSLYLLLVSCPKSEVRAKFKFSILNAKGEETKAMESQRAYRFVQGKDWGFKKFIRRDFLLDEANGLLPDDKLTLFCEVSVVQDSVNISGQNTMNMVKVPECRLADELGGLWENSRFTDCCLCVAGQEFQAHKAILAARSPVFSAMFEHEMEESKKNRVEIKDVEPDVFKEMMCFIYTGKASNLDKMADDLLAAADKYALERLKVMCEEALCSNLSVENAAEILILADLHSADQLKTQAVDFINYHASDVMETSGWKSMVVSHPHLVAEAYRSLASAQCPFLGPPRKRLKQS.

An MATH domain is found at 31 to 161; the sequence is KFSYMWTINN…DDKLTLFCEV (131 aa). Residues 71–191 are required for nuclear localization; the sequence is VNPKGLDEES…PECRLADELG (121 aa). Residues 173-297 enclose the BTB domain; the sequence is QNTMNMVKVP…MCEEALCSNL (125 aa). The tract at residues 297–355 is homodimerization; the sequence is LSVENAAEILILADLHSADQLKTQAVDFINYHASDVMETSGWKSMVVSHPHLVAEAYRS.

This sequence belongs to the Tdpoz family. Homodimer. Part of cullin-RING-based BCR (BTB-CUL3-RBX1) E3 ubiquitin-protein ligase complexes that contain CUL3 and SPOP, plus a target protein.

It localises to the nucleus. The protein resides in the nucleus speckle. It functions in the pathway protein modification; protein ubiquitination. Functionally, component of a cullin-RING-based BCR (BTB-CUL3-RBX1) E3 ubiquitin-protein ligase complex that mediates the ubiquitination of target proteins, leading most often to their proteasomal degradation. In Xenopus laevis (African clawed frog), this protein is Speckle-type POZ protein A (spop-a).